The following is a 337-amino-acid chain: D-alanine--D-alanine ligase (337 aa).

An ATP-grasp domain is found at 124–330 (KMWFSALGIP…FTEYLSLVIN (207 aa)). ATP is bound at residue 154-209 (ALAQWGSIFVKAASQGSSVGCYKVDDSDKVAGVLKDAFGYAPYVIVEKTIKARELE). Positions 284, 297, and 299 each coordinate Mg(2+).

Belongs to the D-alanine--D-alanine ligase family. Requires Mg(2+) as cofactor. The cofactor is Mn(2+).

The protein localises to the cytoplasm. It catalyses the reaction 2 D-alanine + ATP = D-alanyl-D-alanine + ADP + phosphate + H(+). It functions in the pathway cell wall biogenesis; peptidoglycan biosynthesis. In terms of biological role, cell wall formation. In Shewanella baltica (strain OS195), this protein is D-alanine--D-alanine ligase.